A 419-amino-acid chain; its full sequence is RING finger protein 150 (419 aa).

A signal peptide spans 1 to 34 (MALSVIQACRSLALSTWLLSFCFVHLLCLDFTVA). At 35–197 (EKEEWYTAFV…NLQKYVSRTS (163 aa)) the chain is on the extracellular side. The region spanning 70 to 172 (SLKREARGVL…PKGRELVLLM (103 aa)) is the PA domain. A helical membrane pass occupies residues 198–218 (VVFVSISFIILMIISLAWLVF). The Cytoplasmic portion of the chain corresponds to 219–419 (YYIQRFRYAN…IDTPTDDPKC (201 aa)). An RING-type; atypical zinc finger spans residues 267 to 308 (CAVCIEGYKPNDVVRILPCRHLFHKCCVDPWLVDHRTCPMCK). Positions 374–419 (SEPLSQDTMPTEQSELQPIASGSSDVSLTTGAGHSDIDTPTDDPKC) are disordered. Polar residues predominate over residues 376 to 405 (PLSQDTMPTEQSELQPIASGSSDVSLTTGA).

The protein localises to the membrane. The polypeptide is RING finger protein 150 (rnf150) (Danio rerio (Zebrafish)).